The chain runs to 744 residues: Cullin-3 (744 aa).

Residues 677-736 enclose the Cullin neddylation domain; the sequence is MELSAIIVRIMKTEGKLSHQQLLERTTKRTQSRLSLTPSILKRSIQLLIEKEYIQRNADD. Lys688 participates in a covalent cross-link: Glycyl lysine isopeptide (Lys-Gly) (interchain with G-Cter in NEDD8).

It belongs to the cullin family. In terms of assembly, component of a ubiquitin-protein ligase complex consisting of the cullin CUL3, the linker protein ELC1, the substrate receptor ELA1, and the RING protein HRT1. Post-translationally, neddylated; enhancing the ubiquitin-ligase activity.

It participates in protein modification; protein ubiquitination. As part of the CRL3 E3 ubiquitin ligase complex; polyubiquitylates monoubiquitylated RNA polymerase II subunit RPO21 to trigger its proteolysis; plays a role in global genomic repair. This is Cullin-3 (CUL3) from Saccharomyces cerevisiae (strain ATCC 204508 / S288c) (Baker's yeast).